Here is an 88-residue protein sequence, read N- to C-terminus: NADH-ubiquinone oxidoreductase chain 4L (88 aa).

Transmembrane regions (helical) follow at residues 1–21, 22–42, and 55–75; these read MNLS…NRKN, IILM…LVLM, and FSIY…SILV.

The protein belongs to the complex I subunit 4L family.

It is found in the mitochondrion membrane. It carries out the reaction a ubiquinone + NADH + 5 H(+)(in) = a ubiquinol + NAD(+) + 4 H(+)(out). In terms of biological role, core subunit of the mitochondrial membrane respiratory chain NADH dehydrogenase (Complex I) that is believed to belong to the minimal assembly required for catalysis. Complex I functions in the transfer of electrons from NADH to the respiratory chain. The immediate electron acceptor for the enzyme is believed to be ubiquinone. This is NADH-ubiquinone oxidoreductase chain 4L (ND4L) from Schizophyllum commune (Split gill fungus).